Consider the following 300-residue polypeptide: Histone deacetylase HDT3 (300 aa).

Residues 98–112 are compositionally biased toward acidic residues; it reads EDEMDLDSEDEDEEL. Residues 98-300 form a disordered region; the sequence is EDEMDLDSED…AHSKAKHGGK (203 aa). Residues 119-132 are compositionally biased toward basic and acidic residues; that stretch reads ENGKADEKKQKSQE. A compositionally biased stretch (acidic residues) spans 151-197; sequence DDDSDEDETDDSDEDETDDSDEGLSPEEGDDDSSDEDDTSDDEEEDT. Positions 198-211 are enriched in basic and acidic residues; the sequence is PTPKKPEVGKKRAA. Residues 265-275 show a composition bias toward low complexity; sequence SPKSAPKSGVP. The segment at 274-297 adopts a C2H2-type zinc-finger fold; that stretch reads VPCKSCSKSFISETAPQAHSKAKH. The segment covering 279 to 290 has biased composition (polar residues); the sequence is CSKSFISETAPQ.

The protein belongs to the histone deacetylase HD2 family. In terms of assembly, multimer. Possibly forms a homotrimer with HDT1 and/or HDT2.

Its subcellular location is the nucleus. The protein localises to the nucleolus. In terms of biological role, mediates the deacetylation of lysine residues on the N-terminal part of the core histones (H2A, H2B, H3 and H4). Histone deacetylation gives a tag for epigenetic repression and plays an important role in transcriptional regulation, cell cycle progression and developmental events. This chain is Histone deacetylase HDT3 (HDT3), found in Zea mays (Maize).